A 188-amino-acid polypeptide reads, in one-letter code: Heterodisulfide reductase subunit C-like protein (188 aa).

4Fe-4S ferredoxin-type domains lie at 34 to 64 and 78 to 109; these read KELG…FEWY and DELL…FEVM. The [4Fe-4S] cluster site is built by C44, C47, C50, C54, C89, C92, C95, and C99.

Belongs to the HdrC family. In terms of assembly, the heterodisulfide reductase is composed of three subunits; HdlA, HdlB and HdlC. It forms a complex with the F420-non-reducing hydrogenase (Mvh), which provides the reducing equivalents to the heterodisulfide reductase.

The protein resides in the cytoplasm. Functionally, has oxidoreductase activity. The Hdl and Mvh subunits may together mediate electron transfer from hydrogen to an unidentified electron acceptor on the cytoplasmic side of the membrane. The chain is Heterodisulfide reductase subunit C-like protein (hdlC) from Archaeoglobus profundus (strain DSM 5631 / JCM 9629 / NBRC 100127 / Av18).